Reading from the N-terminus, the 472-residue chain is Tubulin gamma chain (472 aa).

Residue 142–148 (AGGTGSG) participates in GTP binding.

This sequence belongs to the tubulin family.

It is found in the cytoplasm. Its subcellular location is the cytoskeleton. The protein resides in the microtubule organizing center. Functionally, tubulin is the major constituent of microtubules. The gamma chain is found at microtubule organizing centers (MTOC) such as the spindle poles, suggesting that it is involved in the minus-end nucleation of microtubule assembly. This is Tubulin gamma chain (TUBG) from Anemia phyllitidis (Fern).